Consider the following 450-residue polypeptide: UDP-N-acetylmuramoylalanine--D-glutamate ligase (450 aa).

An ATP-binding site is contributed by 119 to 125; that stretch reads GSNGKTT.

This sequence belongs to the MurCDEF family.

The protein resides in the cytoplasm. It catalyses the reaction UDP-N-acetyl-alpha-D-muramoyl-L-alanine + D-glutamate + ATP = UDP-N-acetyl-alpha-D-muramoyl-L-alanyl-D-glutamate + ADP + phosphate + H(+). The protein operates within cell wall biogenesis; peptidoglycan biosynthesis. Functionally, cell wall formation. Catalyzes the addition of glutamate to the nucleotide precursor UDP-N-acetylmuramoyl-L-alanine (UMA). The protein is UDP-N-acetylmuramoylalanine--D-glutamate ligase of Bacillus cereus (strain G9842).